The sequence spans 157 residues: 3-hydroxybutyryl-CoA dehydratase (157 aa).

Residues 22–120 enclose the MaoC-like domain; it reads KKEISSSDVV…IPERRRARLA (99 aa).

The catalysed reaction is (3R)-3-hydroxybutanoyl-CoA = (2E)-butenoyl-CoA + H2O. Its function is as follows. Involved in the regeneration of glyoxylate from a molecule of acetyl-CoA. The sequence is that of 3-hydroxybutyryl-CoA dehydratase from Methylorubrum extorquens (strain ATCC 14718 / DSM 1338 / JCM 2805 / NCIMB 9133 / AM1) (Methylobacterium extorquens).